The sequence spans 252 residues: Probable transcriptional regulator SauR (252 aa).

In terms of domain architecture, HTH iclR-type spans N6–S68. Residues L28–K47 constitute a DNA-binding region (H-T-H motif). Residues P83 to E252 enclose the IclR-ED domain.

May regulate transcription of the sauSTU operon. The sequence is that of Probable transcriptional regulator SauR (sauR) from Cupriavidus necator (strain ATCC 17699 / DSM 428 / KCTC 22496 / NCIMB 10442 / H16 / Stanier 337) (Ralstonia eutropha).